A 122-amino-acid polypeptide reads, in one-letter code: Large ribosomal subunit protein uL14 (122 aa).

Belongs to the universal ribosomal protein uL14 family. Part of the 50S ribosomal subunit. Forms a cluster with proteins L3 and L19. In the 70S ribosome, L14 and L19 interact and together make contacts with the 16S rRNA in bridges B5 and B8.

Binds to 23S rRNA. Forms part of two intersubunit bridges in the 70S ribosome. This is Large ribosomal subunit protein uL14 from Thioalkalivibrio sulfidiphilus (strain HL-EbGR7).